We begin with the raw amino-acid sequence, 284 residues long: Aspartate dehydrogenase domain-containing protein (284 aa).

This sequence belongs to the L-aspartate dehydrogenase family.

This is Aspartate dehydrogenase domain-containing protein (aspdh) from Xenopus tropicalis (Western clawed frog).